A 350-amino-acid chain; its full sequence is Probable dTDP-glucose 4,6-dehydratase (350 aa).

Position 7–13 (7–13) interacts with NAD(+); the sequence is GGAGFIG. T132 provides a ligand contact to substrate. D133 serves as the catalytic Proton donor. Active-site proton acceptor residues include E134 and Y157.

This sequence belongs to the NAD(P)-dependent epimerase/dehydratase family. dTDP-glucose dehydratase subfamily. It depends on NAD(+) as a cofactor.

It catalyses the reaction dTDP-alpha-D-glucose = dTDP-4-dehydro-6-deoxy-alpha-D-glucose + H2O. The protein operates within carbohydrate biosynthesis; dTDP-L-rhamnose biosynthesis. The polypeptide is Probable dTDP-glucose 4,6-dehydratase (Sinorhizobium fredii (strain NBRC 101917 / NGR234)).